The following is a 535-amino-acid chain: CTP synthase (535 aa).

Residues 1-267 (MTKYIFVTGG…DKLVCEHMKL (267 aa)) form an amidoligase domain region. S13 is a binding site for CTP. S13 provides a ligand contact to UTP. 14–19 (SLGKGI) lines the ATP pocket. L-glutamine is bound at residue Y54. An ATP-binding site is contributed by D71. 2 residues coordinate Mg(2+): D71 and E141. Residues 148 to 150 (DIE), 188 to 193 (KTKPTQ), and K224 contribute to the CTP site. UTP is bound by residues 188-193 (KTKPTQ) and K224. The region spanning 292–534 (TIGLVGKYVE…VGASLQASES (243 aa)) is the Glutamine amidotransferase type-1 domain. G354 provides a ligand contact to L-glutamine. Residue C381 is the Nucleophile; for glutamine hydrolysis of the active site. L-glutamine-binding positions include 382-385 (LGMQ), E405, and R462. Residues H507 and E509 contribute to the active site.

The protein belongs to the CTP synthase family. As to quaternary structure, homotetramer.

The enzyme catalyses UTP + L-glutamine + ATP + H2O = CTP + L-glutamate + ADP + phosphate + 2 H(+). It catalyses the reaction L-glutamine + H2O = L-glutamate + NH4(+). The catalysed reaction is UTP + NH4(+) + ATP = CTP + ADP + phosphate + 2 H(+). It functions in the pathway pyrimidine metabolism; CTP biosynthesis via de novo pathway; CTP from UDP: step 2/2. Allosterically activated by GTP, when glutamine is the substrate; GTP has no effect on the reaction when ammonia is the substrate. The allosteric effector GTP functions by stabilizing the protein conformation that binds the tetrahedral intermediate(s) formed during glutamine hydrolysis. Inhibited by the product CTP, via allosteric rather than competitive inhibition. Functionally, catalyzes the ATP-dependent amination of UTP to CTP with either L-glutamine or ammonia as the source of nitrogen. Regulates intracellular CTP levels through interactions with the four ribonucleotide triphosphates. This is CTP synthase from Bacillus pumilus (strain SAFR-032).